The primary structure comprises 840 residues: Recyclin-1 (840 aa).

The 48-residue stretch at 1-48 (MDDLLKVPEIVTNIASYLSTVDYLSFQQVNKRVYAIINGKNDSKYWSL) folds into the F-box domain. Phosphoserine is present on serine 409.

Interacts with SKP1.

It localises to the cytoplasm. The protein resides in the bud neck. It is found in the cell tip. Its function is as follows. Involved in recycling plasma membrane proteins internalized by endocytosis. Required for recycling of the v-SNARE SNC1. The sequence is that of Recyclin-1 (RCY1) from Saccharomyces cerevisiae (strain ATCC 204508 / S288c) (Baker's yeast).